The primary structure comprises 984 residues: Respiratory nitrate reductase subunit alpha (984 aa).

Positions 1-43 (MSRNDASQLDDGETTAESPPDDQANDAPEVGDPPGDPVDADSG) are disordered. The span at 8 to 24 (QLDDGETTAESPPDDQA) shows a compositional bias: acidic residues. In terms of domain architecture, 4Fe-4S Mo/W bis-MGD-type spans 103–167 (DSVSRSTHSV…CYTDYVNADQ (65 aa)). [4Fe-4S] cluster is bound by residues His110, Cys114, Cys118, and Cys153. A Mo-bis(molybdopterin guanine dinucleotide)-binding site is contributed by Asp249.

This sequence belongs to the prokaryotic molybdopterin-containing oxidoreductase family. Probable multiprotein complex; a catalytic heterodimer of an alpha and beta chain is proposed to associate with additional subunits involved in membrane attachment and electron transfer. It depends on [4Fe-4S] cluster as a cofactor. Mo-bis(molybdopterin guanine dinucleotide) is required as a cofactor. Post-translationally, exported by the Tat system.

It localises to the cell membrane. It carries out the reaction nitrate + a quinol = a quinone + nitrite + H2O. With respect to regulation, inhibited by cyanide, azide and antimycin A. Enzyme stability is not dependent on salt concentration. Functionally, the respiratory membrane-bound nitrate reductase enzyme complex plays a role in generation of metabolic energy by using nitrate as a terminal electron acceptor during anaerobic conditions. The alpha chain is the actual site of nitrate reduction. The chain is Respiratory nitrate reductase subunit alpha (narG) from Haloferax mediterranei (strain ATCC 33500 / DSM 1411 / JCM 8866 / NBRC 14739 / NCIMB 2177 / R-4) (Halobacterium mediterranei).